We begin with the raw amino-acid sequence, 463 residues long: Stress-activated protein kinase jnk-1 (463 aa).

Over residues 1–12 (MEERLSTTSSYP) the composition is skewed to polar residues. The segment at 1–23 (MEERLSTTSSYPSHPGRSVEEDH) is disordered. Residues 119–412 (YQNLRLIGSG…ISVDDALRHP (294 aa)) form the Protein kinase domain. ATP contacts are provided by residues 126–131 (GSGAQG) and Lys-148. Asp-244 serves as the catalytic Proton acceptor. Thr-276 carries the post-translational modification Phosphothreonine. Positions 276-278 (TPY) match the TXY motif. A Phosphotyrosine modification is found at Tyr-278.

It belongs to the protein kinase superfamily. CMGC Ser/Thr protein kinase family. MAP kinase subfamily. Binds to the scaffolding protein, unc-16. Unc-16 also binds other components of the JNK signaling pathway. Interacts with daf-16. Mg(2+) is required as a cofactor. In terms of processing, dually phosphorylated on Thr-276 and Tyr-278, which activates the enzyme. As to expression, expressed in most neurons, including nerve ring, head ganglions, dorsal and ventral nerve cords and tail ganglions. The Thr-276/Tyr-278 phosphorylated form is present in the nerve ring upon heat exposure.

It is found in the cytoplasm. The protein localises to the perikaryon. It localises to the cell projection. The protein resides in the axon. It catalyses the reaction L-seryl-[protein] + ATP = O-phospho-L-seryl-[protein] + ADP + H(+). The catalysed reaction is L-threonyl-[protein] + ATP = O-phospho-L-threonyl-[protein] + ADP + H(+). With respect to regulation, activated by threonine and tyrosine phosphorylation by either of the dual specificity kinases, jkk-1 and mek-1. Its function is as follows. Serine/threonine-protein kinase which responds to activation by environmental stress by phosphorylating a number of transcription factors such as daf-16, and thus regulates transcriptional activity. By phosphorylating daf-16, plays a role in daf-16 nuclear translocation in intestinal cells in response to environmental stresses such as heat and oxidative stresses. Downstream of jkk-1, may coordinate locomotion via type-D GABAergic motoneurons and regulates synaptic vesicle transport in conjunction with unc-16. Independently of jkk-1, may regulate some mechanosensory responses, such as response to touch. Independently of jkk-1 and downstream of mek-1, plays a role in resistance to heavy metals, such as Cu(2+) or Cd(2+). Regulates germline cell apoptosis in response to heavy metals such as Cu(2+) and arsenite. Required for dopaminergic CEP neuron degeneration in response to Mn(2+). Required for normal sleep bout quantity and arousal thresholds during the transition from the last larval stage to adulthood in well-fed animals. Downstream of jkk-1 but independently of mek-1, positively regulates lifespan. This chain is Stress-activated protein kinase jnk-1 (jnk-1), found in Caenorhabditis elegans.